The primary structure comprises 1657 residues: Androglobin (1657 aa).

Over residues 1 to 11 (MASKQAKRKEV) the composition is skewed to basic residues. 2 disordered regions span residues 1–40 (MASKQAKRKEVHRINSAHGSDKSKDLYHFGSNVPPGSFEQ) and 321–398 (TKEN…SSDV). A Calpain catalytic domain is found at 70 to 402 (KDKTAKSPIF…RPSSDVQYSM (333 aa)). Basic and acidic residues predominate over residues 321 to 386 (TKENKDGKDG…DGEKEKEKFK (66 aa)). Residues 762-889 (HVCSMTTFVI…EDVSLAEWVD (128 aa)) form the Globin; C-terminal part domain. Residues Q791 and H823 each contribute to the heme b site. In terms of domain architecture, IQ spans 905–934 (EIAAAVKIQSMWKGCYVRLLMKARKPETKE). Residues 935 to 967 (NVTVADTLQKIWAVLEMNLEQYALSLLRLMFKS) form the Globin; N-terminal part domain. 4 disordered regions span residues 1184-1226 (SKQV…TDTG), 1288-1356 (KHEE…QEDP), 1422-1459 (TTDTTTSAPSPETLSVSQSQTKSSEEGELDTGKYADIK), and 1638-1657 (IEKKSPASDSQKKKKVGKKK). The segment covering 1321–1336 (EKSAEKEKLAKEKQAP) has biased composition (basic and acidic residues). Composition is skewed to polar residues over residues 1341-1351 (QQVQMPTAVHS) and 1422-1443 (TTDTTTSAPSPETLSVSQSQTK). The stretch at 1585-1640 (DEVLEMYGEMRDSVDEARQKILDIREVYRNKLLEAERLRMEALAAQEAAVKIEIEK) forms a coiled coil.

This sequence in the central section; belongs to the globin family. It in the N-terminal section; belongs to the peptidase C2 family. As to quaternary structure, interacts with septin SEPT10; contributes to in vitro proteolytic cleavage of SEPT10 in a calmodulin-dependent manner. Interacts with CFAP69. Interacts with SPEF2. May interact with calmodulin. As to expression, strongly expressed in testis and lung. Weakly expressed in heart, brain, spleen, kidney and tongue.

It localises to the cell projection. It is found in the cilium. The protein localises to the flagellum. Probable chimeric globin with a bis-histidyl six-coordinate heme-iron atom through which it could bind dioxygen, carbon monoxide and nitric oxide. Required for sperm flagellum formation and maturation of elongating spermatids, thus playing an essential role in male fertility. This chain is Androglobin, found in Mus musculus (Mouse).